The following is a 328-amino-acid chain: Reticulocalbin-3 (328 aa).

The signal sequence occupies residues 1-20 (MMWRWSFLLLLLLLRHWALG). The tract at residues 24-48 (PDAGPHGQDRVHHGTPLSEAPHDDA) is disordered. 6 consecutive EF-hand domains span residues 77–112 (QARLGRIVDRMDLAGDSDGWVSLAELRAWIAHTQQR), 113–148 (HIRDSVSAAWHTYDTDRDGRVGWEELRNATYGHYEP), 163–198 (KMLARDERRFRVADQDGDSMATREELTAFLHPEEFP), 200–235 (MRDIVVAETLEDLDKNKDGYVQVEEYIADLYSEEPG), 241–276 (WVQTERQQFREFRDLNKDGRLDGSEVGYWVLPPSQD), and 277–312 (QPLVEANHLLHESDTDKDGRLSKAEILSNWNMFVGS). Positions 92, 94, 96, 101, 126, 128, 130, 132, and 137 each coordinate Ca(2+). Asparagine 140 carries an N-linked (GlcNAc...) asparagine glycan. Positions 176, 178, 180, 182, 187, 213, 215, 217, 219, 224, 254, 256, 258, 260, 265, 290, 292, 294, 296, and 301 each coordinate Ca(2+). Positions 325–328 (HDEL) match the Prevents secretion from ER motif.

This sequence belongs to the CREC family. Interacts with PCSK6 (immature form including the propeptide); probably involved in the maturation and the secretion of PCSK6. Degraded by PCSK6 and other endoproteases including FURIN and PCSK5. In terms of processing, N-glycosylated. In terms of tissue distribution, highly expressed in lung and heart. Also detected in liver, spleen, kidney, skeletal muscle, intestine, stomach, and brain.

The protein localises to the endoplasmic reticulum lumen. Functionally, probable molecular chaperone assisting protein biosynthesis and transport in the endoplasmic reticulum. Required for the proper biosynthesis and transport of pulmonary surfactant-associated protein A/SP-A, pulmonary surfactant-associated protein D/SP-D and the lipid transporter ABCA3. By regulating both the proper expression and the degradation through the endoplasmic reticulum-associated protein degradation pathway of these proteins plays a crucial role in pulmonary surfactant homeostasis. Has an anti-fibrotic activity by negatively regulating the secretion of type I and type III collagens. This calcium-binding protein also transiently associates with immature PCSK6 and regulates its secretion. The polypeptide is Reticulocalbin-3 (Mus musculus (Mouse)).